The primary structure comprises 461 residues: Elongation factor 1-alpha (461 aa).

The region spanning 5-242 (KIHINIVVIG…DAILPPSRPT (238 aa)) is the tr-type G domain. The interval 14–21 (GHVDSGKS) is G1. Residue 14–21 (GHVDSGKS) coordinates GTP. The interval 70-74 (GITID) is G2. A G3 region spans residues 91–94 (DAPG). GTP is bound by residues 91–95 (DAPGH) and 153–156 (NKMD). The tract at residues 153–156 (NKMD) is G4. The tract at residues 194 to 196 (SGW) is G5. A 5-glutamyl glycerylphosphorylethanolamine mark is found at E301 and E374.

It belongs to the TRAFAC class translation factor GTPase superfamily. Classic translation factor GTPase family. EF-Tu/EF-1A subfamily.

Its subcellular location is the cytoplasm. Functionally, this protein promotes the GTP-dependent binding of aminoacyl-tRNA to the A-site of ribosomes during protein biosynthesis. This Apis mellifera (Honeybee) protein is Elongation factor 1-alpha.